A 142-amino-acid chain; its full sequence is Universal stress protein C (142 aa).

The protein belongs to the universal stress protein A family.

The protein localises to the cytoplasm. In terms of biological role, required for resistance to DNA-damaging agents. The chain is Universal stress protein C (uspC) from Escherichia coli O6:H1 (strain CFT073 / ATCC 700928 / UPEC).